The sequence spans 648 residues: MGSSKPLKGFVICCTSIDLKQRTEISTKATKLGAAYRSDFTKDVTHLIAGDFDTPKYKFAAKSRPDIKIMSSEWIPVLYESWVQGEDLDDGLLVDKHFLPTLFKCRVCLTNIGQPERSRIENYVLKHGGTFCPDLTRDVTHLIAGTSSGRKYEYALKWKINVVCVEWLWQSIQRNAVLEPQYFQLDMPAEKIGLGAYVRLDPNTTEAKSYSENQKISKNKEKSGQSLAALAEEADLEPVIMKRGKKRDRSILWEELNNGKFEFSSRSEENSVLLDDFTPETVQPLEENELDTELNIENEAKLFKNLTFYLYEFPNTKVSRLHKCLSDNGGQISEFLSSTIDFVVIPHYFPVDELPIFSFPTVNEWWIERCLYYKKIFGIDEHALAKPFFRPSLVPYFNGLSIHLTGFKGEELSHLKKALTILGAVVHEFLGVQRSILLVNTNEPFSMKTRFKIQHATEWNVRVVGVAWLWNIIQSGKFIDQVSPWAIDKKENQEIKKFTNQNNMVFPTSDRDTRLQNSLAQQPIGHSTPHNSPSLLSVKKRQNNHIRSNTLIQLNSNSKDSTIFPRRSVTVPGDKIDTVWKSSVTKPETPTSPQEHVSYIDPDAQREKHKLYAQLTSNVDAIPPANDLQNQENGLLLITESHRKLRRR.

BRCT domains are found at residues 2-92 (GSSK…DDGL) and 96-185 (KHFL…YFQL). A Nuclear localization signal motif is present at residues 242 to 249 (KRGKKRDR). 2 consecutive BRCT domains span residues 298–384 (NEAK…EHAL) and 392–486 (SLVP…SPWA). S592 bears the Phosphoserine mark. The short motif at 643 to 648 (RKLRRR) is the Nuclear localization signal element.

Interacts with drc1/sld2. Interacts (via BRCT1,2 domains) with crb2; a single rad4 molecule interacts simultaneously with both 'Thr-187' phosphorylation sites in a crb2 dimer.

It localises to the nucleus. In terms of biological role, essential component for DNA replication and also the checkpoint control system which couples S and M phases. May directly or indirectly interact with chromatin proteins to form the complex required for the initiation and/or progression of DNA synthesis. Interacts simultaneously with both 'Thr-187' phosphorylation sites in a crb2 dimer for establishing the DNA checkpoint. The sequence is that of S-M checkpoint control protein rad4 (rad4) from Schizosaccharomyces pombe (strain 972 / ATCC 24843) (Fission yeast).